A 62-amino-acid polypeptide reads, in one-letter code: Conotoxin Pn-B02 (62 aa).

A signal peptide spans 1 to 19 (MRCLPVFIILLLLIASAPS). Residues 20-49 (FDALPKTEDNVPLSSFHDNLKRTRRIHLNI) constitute a propeptide that is removed on maturation. Alanine amide is present on alanine 61.

The protein belongs to the conotoxin T superfamily. In terms of processing, contains 2 disulfide bonds that can be either 'C1-C3, C2-C4' or 'C1-C4, C2-C3', since these disulfide connectivities have been observed for conotoxins with cysteine framework V (for examples, see AC P0DQQ7 and AC P81755). In terms of tissue distribution, expressed by the venom duct.

It localises to the secreted. The polypeptide is Conotoxin Pn-B02 (Conus pennaceus (Feathered cone)).